Here is a 370-residue protein sequence, read N- to C-terminus: Phospho-2-dehydro-3-deoxyheptonate aldolase, phenylalanine-inhibited (370 aa).

The protein belongs to the class-I DAHP synthase family.

The catalysed reaction is D-erythrose 4-phosphate + phosphoenolpyruvate + H2O = 7-phospho-2-dehydro-3-deoxy-D-arabino-heptonate + phosphate. It participates in metabolic intermediate biosynthesis; chorismate biosynthesis; chorismate from D-erythrose 4-phosphate and phosphoenolpyruvate: step 1/7. Its activity is regulated as follows. Inhibited by phenyalanine. Functionally, stereospecific condensation of phosphoenolpyruvate (PEP) and D-erythrose-4-phosphate (E4P) giving rise to 3-deoxy-D-arabino-heptulosonate-7-phosphate (DAHP). The sequence is that of Phospho-2-dehydro-3-deoxyheptonate aldolase, phenylalanine-inhibited (ARO3) from Saccharomyces cerevisiae (strain ATCC 204508 / S288c) (Baker's yeast).